A 500-amino-acid polypeptide reads, in one-letter code: Proline--tRNA ligase (500 aa).

The protein belongs to the class-II aminoacyl-tRNA synthetase family. ProS type 3 subfamily. As to quaternary structure, homodimer.

Its subcellular location is the cytoplasm. The enzyme catalyses tRNA(Pro) + L-proline + ATP = L-prolyl-tRNA(Pro) + AMP + diphosphate. Functionally, catalyzes the attachment of proline to tRNA(Pro) in a two-step reaction: proline is first activated by ATP to form Pro-AMP and then transferred to the acceptor end of tRNA(Pro). The protein is Proline--tRNA ligase of Paramagnetospirillum magneticum (strain ATCC 700264 / AMB-1) (Magnetospirillum magneticum).